The primary structure comprises 375 residues: CCA-adding enzyme (375 aa).

ATP contacts are provided by G8 and R11. Positions 8 and 11 each coordinate CTP. D21 and D23 together coordinate Mg(2+). ATP contacts are provided by R91, R137, and R140. The CTP site is built by R91, R137, and R140.

It belongs to the tRNA nucleotidyltransferase/poly(A) polymerase family. Bacterial CCA-adding enzyme type 2 subfamily. It depends on Mg(2+) as a cofactor.

The enzyme catalyses a tRNA precursor + 2 CTP + ATP = a tRNA with a 3' CCA end + 3 diphosphate. It catalyses the reaction a tRNA with a 3' CCA end + 2 CTP + ATP = a tRNA with a 3' CCACCA end + 3 diphosphate. Catalyzes the addition and repair of the essential 3'-terminal CCA sequence in tRNAs without using a nucleic acid template. Adds these three nucleotides in the order of C, C, and A to the tRNA nucleotide-73, using CTP and ATP as substrates and producing inorganic pyrophosphate. tRNA 3'-terminal CCA addition is required both for tRNA processing and repair. Also involved in tRNA surveillance by mediating tandem CCA addition to generate a CCACCA at the 3' terminus of unstable tRNAs. While stable tRNAs receive only 3'-terminal CCA, unstable tRNAs are marked with CCACCA and rapidly degraded. The polypeptide is CCA-adding enzyme (Pseudomonas entomophila (strain L48)).